A 385-amino-acid polypeptide reads, in one-letter code: MSNMQQTTGYVYANELLQYRFSNKHPFNQMRLKLTTELLMELGQLKQHHIISPRIATDDELSLIHAYDYIQAIRHASHGILSENEAKKYGLDGEDTLQFRMMHKHSARIVGGALNLADQIMSGTLTNGCHLGGGLHHSLPGRANGFCIYNDVAITISYLMQKYNQRVLCIDTDAHHGDGTQWSFYTNDQALIYSIHETGKFLFPGSGHYTERGAEKGFGYTVNIPLEPYTEDQSFLDVFKQTIEPVVASFKPDIIVSVHGVDVHYLDPLTHMSCTLNTLYEIPYIVKSLADTYTQGKVIMFGGGGYNIWKVVPRAWSHVFLALIGEQPPTGSLPERWLTKWQPYATCTLPTNWSDDKENYIEIPRRKEISEINMKQAQKVLSWFE.

The protein belongs to the histone deacetylase family.

Its pathway is ketone degradation; acetoin degradation. Functionally, role in growth on acetoin or butanediol. Involved in the breakdown of these compounds used as a carbon source. The protein is Acetoin utilization protein AcuC (acuC) of Staphylococcus xylosus.